The primary structure comprises 327 residues: tRNA(Ile)-lysidine synthase (327 aa).

Residue 32–37 participates in ATP binding; sequence SGGQDS.

The protein belongs to the tRNA(Ile)-lysidine synthase family.

The protein localises to the cytoplasm. It carries out the reaction cytidine(34) in tRNA(Ile2) + L-lysine + ATP = lysidine(34) in tRNA(Ile2) + AMP + diphosphate + H(+). Ligates lysine onto the cytidine present at position 34 of the AUA codon-specific tRNA(Ile) that contains the anticodon CAU, in an ATP-dependent manner. Cytidine is converted to lysidine, thus changing the amino acid specificity of the tRNA from methionine to isoleucine. The sequence is that of tRNA(Ile)-lysidine synthase from Synechococcus sp. (strain JA-2-3B'a(2-13)) (Cyanobacteria bacterium Yellowstone B-Prime).